We begin with the raw amino-acid sequence, 307 residues long: MQSPHISVLLDEVLSFFKDLRGNFIDCTLGYAGHSSAILSQNENLNLIACDKDIEAINFSLKKLEPFGSRVKIYKSNFSELISKLSSDEISNVRGILADIGVSSLQIDKDDRGFGLGSSALDMRMDKERGFSAYDVVNGYSFDELVRIFRDYGELKNASGIANKIINARNLGEITSAKELANIIGIAQIKGRGVSPAILAFQAIRIEVNGELDELTNLLDSIEKGGFKDCLVTIITFHSLEDRIVKERFKKWANSCICPPGIYRCECGNNHELGEILTKKPLTASQSELAQNSRSKSAKLRVFKIKG.

S-adenosyl-L-methionine contacts are provided by residues 32–34, Asp-51, Ile-82, Asp-99, and Gln-106; that span reads AGH.

Belongs to the methyltransferase superfamily. RsmH family.

It localises to the cytoplasm. It catalyses the reaction cytidine(1402) in 16S rRNA + S-adenosyl-L-methionine = N(4)-methylcytidine(1402) in 16S rRNA + S-adenosyl-L-homocysteine + H(+). In terms of biological role, specifically methylates the N4 position of cytidine in position 1402 (C1402) of 16S rRNA. This is Ribosomal RNA small subunit methyltransferase H from Campylobacter concisus (strain 13826).